Consider the following 239-residue polypeptide: Uracil-DNA glycosylase (239 aa).

Asp65 (proton acceptor) is an active-site residue.

The protein belongs to the uracil-DNA glycosylase (UDG) superfamily. UNG family.

It is found in the cytoplasm. The enzyme catalyses Hydrolyzes single-stranded DNA or mismatched double-stranded DNA and polynucleotides, releasing free uracil.. Its function is as follows. Excises uracil residues from the DNA which can arise as a result of misincorporation of dUMP residues by DNA polymerase or due to deamination of cytosine. In Levilactobacillus brevis (strain ATCC 367 / BCRC 12310 / CIP 105137 / JCM 1170 / LMG 11437 / NCIMB 947 / NCTC 947) (Lactobacillus brevis), this protein is Uracil-DNA glycosylase.